A 1074-amino-acid polypeptide reads, in one-letter code: Probable arabinosyltransferase C (1074 aa).

10 consecutive transmembrane segments (helical) span residues 15–37 (ARLVAIIAGLLGTLMAIATPLLP), 214–236 (LLKLLAMIVGVAMTVIALGALHV), 251–273 (SRWWSMTPLDGLVSAMLVWWHFV), 415–437 (IIIGALTLFSGPTGIAAVGALLV), 452–474 (RFGYWALLAPIAAAGTVTIFLIF), 516–538 (SVARRFAVLTLLLALAVSIAMTL), 573–595 (THQFGVFAGLAGCLGALAAVAVT), 608–630 (FGAAVLFVTALSFATVNGWWYVS), 645–667 (FGFTTMLLGLSVLALLVAAWFHF), and 684–706 (LLVAPLAVATWALVIFEVVSLTL).

Belongs to the emb family.

Its subcellular location is the cell membrane. Its function is as follows. Arabinosyl transferase responsible for the polymerization of arabinose into the arabinan of arabinogalactan. The chain is Probable arabinosyltransferase C (embC) from Mycolicibacterium smegmatis (Mycobacterium smegmatis).